Reading from the N-terminus, the 374-residue chain is F-box/LRR-repeat protein 8 (374 aa).

One can recognise an F-box domain in the interval 2-48 (AEPGEQLPEEVLALIFRHLPLPDRAAAARVCRAWAAAATCSAVWHDT).

Directly interacts with SKP1 and CUL1.

Its function is as follows. Substrate-recognition component of the SCF (SKP1-CUL1-F-box protein)-type E3 ubiquitin ligase complex. The sequence is that of F-box/LRR-repeat protein 8 (FBXL8) from Bos taurus (Bovine).